We begin with the raw amino-acid sequence, 800 residues long: Phenylalanine--tRNA ligase beta subunit (800 aa).

Positions 39–154 constitute a tRNA-binding domain; the sequence is TKDIKKLVVG…EAVKPGTDAL (116 aa). A B5 domain is found at 408 to 483; that stretch reads SFVTPIEITA…RIYGYDEIPS (76 aa). Residues Asp461, Asp467, Glu470, and Glu471 each coordinate Mg(2+). One can recognise an FDX-ACB domain in the interval 708 to 800; sequence PRFPGVTRDI…ALKKHGAIIR (93 aa).

The protein belongs to the phenylalanyl-tRNA synthetase beta subunit family. Type 1 subfamily. Tetramer of two alpha and two beta subunits. Mg(2+) is required as a cofactor.

Its subcellular location is the cytoplasm. It catalyses the reaction tRNA(Phe) + L-phenylalanine + ATP = L-phenylalanyl-tRNA(Phe) + AMP + diphosphate + H(+). This is Phenylalanine--tRNA ligase beta subunit from Staphylococcus epidermidis (strain ATCC 12228 / FDA PCI 1200).